The chain runs to 95 residues: Co-chaperonin GroES (95 aa).

Belongs to the GroES chaperonin family. As to quaternary structure, heptamer of 7 subunits arranged in a ring. Interacts with the chaperonin GroEL.

The protein localises to the cytoplasm. Functionally, together with the chaperonin GroEL, plays an essential role in assisting protein folding. The GroEL-GroES system forms a nano-cage that allows encapsulation of the non-native substrate proteins and provides a physical environment optimized to promote and accelerate protein folding. GroES binds to the apical surface of the GroEL ring, thereby capping the opening of the GroEL channel. The protein is Co-chaperonin GroES of Stenotrophomonas maltophilia (strain K279a).